We begin with the raw amino-acid sequence, 292 residues long: uncharacterized protein (292 aa).

An HTH lysR-type domain is found at 1 to 58 (MEWEQLEYFQTLARMQHVTKAAKSLSITQPALSRSIARLENHLGVPLFDRQGRSISLN). The H-T-H motif DNA-binding region spans 18–37 (VTKAAKSLSITQPALSRSIA).

It belongs to the LysR transcriptional regulatory family.

This is an uncharacterized protein from Bacillus subtilis (strain 168).